We begin with the raw amino-acid sequence, 384 residues long: H-2 class I histocompatibility antigen, TLA(B) alpha chain (384 aa).

A signal peptide spans 1–26; that stretch reads MRMGTPVPGTLLILLAASQGQTQTCP. The segment at 27–116 is alpha-1; that stretch reads GSHSLRYFYT…MLDYYNLSQN (90 aa). Topologically, residues 27–314 are extracellular; that stretch reads GSHSLRYFYT…TSMPNRTTVR (288 aa). N-linked (GlcNAc...) asparagine glycans are attached at residues Asn-63, Asn-112, and Asn-116. The tract at residues 117–208 is alpha-2; that stretch reads GSHTIQVMYG…ENRKKTQECT (92 aa). Cystine bridges form between Cys-127-Cys-190 and Cys-229-Cys-285. Residues 209–300 are alpha-3; that stretch reads DPPKTHVTHH…GLPEPLTLRW (92 aa). The 89-residue stretch at 211–299 folds into the Ig-like C1-type domain; sequence PKTHVTHHPR…EGLPEPLTLR (89 aa). A connecting peptide region spans residues 301–314; that stretch reads EPPQTSMPNRTTVR. Residue Asn-309 is glycosylated (N-linked (GlcNAc...) asparagine). Residues 315–334 traverse the membrane as a helical segment; it reads ALLGAMIILGFMSGSVMMWM. Residues 335–384 lie on the Cytoplasmic side of the membrane; it reads RKNNGGNGDDNTAAYQNEREHLSLDPRAESEALGVEAGMKDLPSAPPLVS. Basic and acidic residues predominate over residues 354-364; it reads EHLSLDPRAES. A disordered region spans residues 354–384; it reads EHLSLDPRAESEALGVEAGMKDLPSAPPLVS.

This sequence belongs to the MHC class I family. Heterodimer of an alpha chain and a beta chain (beta-2-microglobulin). TL antigens are only expressed on thymocytes, activated T-lymphocytes and on some thymic leukemias.

It is found in the membrane. Its function is as follows. Involved in the presentation of foreign antigens to the immune system. This is H-2 class I histocompatibility antigen, TLA(B) alpha chain (H2-T3) from Mus musculus (Mouse).